A 687-amino-acid polypeptide reads, in one-letter code: Putative pentatricopeptide repeat-containing protein At3g15930 (687 aa).

PPR repeat units follow at residues 98-132 (DVVV…GVTP), 133-168 (DSHT…GLGS), 169-199 (NLYV…RCKE), 200-234 (DVFS…LVSP), 235-269 (TSVT…KTEP), 270-304 (SLRL…DVIS), 305-331 (WTSI…MPVR), 332-366 (DRIS…GMIP), 367-401 (DEFT…KIKN), 402-432 (DVVV…MDQR), 433-467 (DKFT…SIQP), 468-498 (DDIT…MRSD), and 504-534 (SLVH…MPMN). The type E motif stretch occupies residues 539 to 614 (VWGALLGASR…TPGFSLIEVN (76 aa)). The tract at residues 615–645 (GFAHEFVAGDKSHLQSEEIYMKLEELAQEST) is type E(+) motif.

Belongs to the PPR family. PCMP-E subfamily.

This chain is Putative pentatricopeptide repeat-containing protein At3g15930 (PCMP-E51), found in Arabidopsis thaliana (Mouse-ear cress).